A 1084-amino-acid chain; its full sequence is Probable hemoglobin and hemoglobin-haptoglobin-binding protein 3 (1084 aa).

The N-terminal stretch at 1–24 is a signal peptide; the sequence is MTNFKFSLLACSIAFALNASTVYA. Tandem repeats lie at residues 26–29, 30–33, 34–37, 38–41, 42–45, 46–49, 50–53, 54–57, 58–61, 62–65, 66–69, and 70–73. The tract at residues 26-73 is 12 X 4 AA tandem repeats of Q-P-T-N; sequence QPTNQPTNQPTNQPTNQPTNQPTNQPTNQPTNQPTNQPTNQPTNQPTN. Over residues 26-75 the composition is skewed to low complexity; it reads QPTNQPTNQPTNQPTNQPTNQPTNQPTNQPTNQPTNQPTNQPTNQPTNQN. The disordered stretch occupies residues 26–77; that stretch reads QPTNQPTNQPTNQPTNQPTNQPTNQPTNQPTNQPTNQPTNQPTNQPTNQNSN. The short motif at 83-90 is the TonB box element; that stretch reads EQINVSGS. Residues 95-220 form the TBDR plug domain; the sequence is NIKEKKVGET…LGGSVIFETK (126 aa). The region spanning 228 to 1084 is the TBDR beta-barrel domain; sequence DKDYYLSYKR…NYRMSVQFEF (857 aa). The TonB C-terminal box motif lies at 1067-1084; that stretch reads NRFYAPGRNYRMSVQFEF.

It belongs to the TonB-dependent receptor family. Hemoglobin/haptoglobin binding protein subfamily.

Its subcellular location is the cell outer membrane. Functionally, acts as a receptor for hemoglobin or the hemoglobin/haptoglobin complex of the human host and is required for heme uptake. In Haemophilus influenzae (strain ATCC 51907 / DSM 11121 / KW20 / Rd), this protein is Probable hemoglobin and hemoglobin-haptoglobin-binding protein 3.